Reading from the N-terminus, the 181-residue chain is MKQLLDFLPLIIFFAVYKFFDIYIASGALIAATALQLVVTYALYKKLEKMHLITFAMVTVFGTLTLVFHDDAFIKWKVTIIYALFALALGVSQLLNKSILKSMLGKEMKVADNIWAHVTWYWVSFFAICGLVNIYVAFRLPLETWVNFKVFGLTALTLINTVITVFYLYKHLPEDQRKELK.

Transmembrane regions (helical) follow at residues 10-30 (LIIFFAVYKFFDIYIASGALI), 50-70 (MHLITFAMVTVFGTLTLVFHD), 72-92 (AFIKWKVTIIYALFALALGVS), 118-138 (VTWYWVSFFAICGLVNIYVAF), and 148-168 (FKVFGLTALTLINTVITVFYL).

This sequence belongs to the YciB family.

The protein resides in the cell inner membrane. Plays a role in cell envelope biogenesis, maintenance of cell envelope integrity and membrane homeostasis. The chain is Inner membrane-spanning protein YciB from Shewanella sp. (strain MR-7).